Reading from the N-terminus, the 166-residue chain is Interferon gamma-related (166 aa).

An N-terminal signal peptide occupies residues 1-26 (MYCRLNMVYLICALLLIVSLQGTVGA). Asn91 carries N-linked (GlcNAc...) asparagine glycosylation.

The protein belongs to the type II (or gamma) interferon family. In terms of assembly, homodimer. In terms of tissue distribution, strongly expressed in spleen. Also detected at lower levels in gill, kidney, heart, brain and intestine. In immune cell populations, expressed at highest levels in peripheral blood leukocytes and at lower levels in splenocytes, granulocytes, monocytes and macrophages.

It is found in the secreted. Cytokine which binds to interferon gamma receptor 1 (ifngr1). Has activating effects on primary macrophages. Induces nitric oxide production and phagocytic responses in macrophages. Primes monocytes for production of reactive oxygen intermediates (ROI), although the effect is short-lived. Also has inhibitory effects on monocyte priming by ifng1 (interferon gamma 1) and tnfb (TNF-alpha 2). Stimulates phosphorylation of the JAK/STAT signal transducer stat1, but fails to induce stat1 nuclear localization. Promotes increased expression of a number of genes important for macrophage activity, including the interferon regulatory factors irf2 and irf9. This is Interferon gamma-related from Carassius auratus (Goldfish).